We begin with the raw amino-acid sequence, 344 residues long: L-rhamnose-proton symporter (344 aa).

Transmembrane regions (helical) follow at residues 4-24, 38-58, 68-88, 101-121, 137-157, 175-195, 214-234, 255-275, 290-310, and 324-344; these read PILLGIFWHFIGAASAACFYA, WSLGGFFSWIILPWSISWWLL, FDMATLLPIFLFGAMWGIGNI, MGIGIAIGVTLIIGTLMTPVL, TLLGVLVAVIGVAIVSYAGLL, LILAVMCGIFSAGMSFAMDAA, LPSYVVIMGGGAIVNLGFCFI, LIANALFAILGGVMWYLQFFF, ISWMLHMSFYVLCGGIVGLLF, and LVLGCVVIILAANIVGLGMAV.

This sequence belongs to the L-rhamnose transporter (TC 2.A.7.6) family.

The protein localises to the cell inner membrane. It carries out the reaction L-rhamnopyranose(in) + H(+)(in) = L-rhamnopyranose(out) + H(+)(out). Functionally, uptake of L-rhamnose across the cytoplasmic membrane with the concomitant transport of protons into the cell (symport system). The sequence is that of L-rhamnose-proton symporter from Pectobacterium atrosepticum (strain SCRI 1043 / ATCC BAA-672) (Erwinia carotovora subsp. atroseptica).